The following is a 382-amino-acid chain: MGSTRIPLVKALHSPVSDYVNYDIIVRHYNYTGKLKISADKDNGIKLISVVFILICCFIILENIFVLLTIWKTKKFHRPMYYFIGNLALSDLLAGVAYTANLLLSGATTYKLTPAQWFLREGSMFVALSASVFSLLAIAIERYITMLKMKLHNGSNRFRSFLLISACWVISLILGGLPIMGWNCISTLPSCSTVLPLYHKHYILFCTTVFTLLLLSIVILYCRIYSLVRTRSRRLTFRKNISKASRSSEKSLALLKTVIIVLGVFIACWAPLFILLLLDVGCKVKTCDILFRTEYFLVLAVLNSGTNPIIYTLSNKEMRRAFVRIMSCCKCPSRDSASKFTRPIIAGMEFSRSKSDNSSHPQKDDGDNPETIMSSGNVNSSS.

The Extracellular segment spans residues 1–46 (MGSTRIPLVKALHSPVSDYVNYDIIVRHYNYTGKLKISADKDNGIK). Lysine 10 is modified (N6-acetyllysine). A glycan (N-linked (GlcNAc...) asparagine) is linked at asparagine 30. Residues 47–68 (LISVVFILICCFIILENIFVLL) form a helical membrane-spanning segment. Residues 69-82 (TIWKTKKFHRPMYY) are Cytoplasmic-facing. Residues 83–104 (FIGNLALSDLLAGVAYTANLLL) form a helical membrane-spanning segment. The Extracellular portion of the chain corresponds to 105–116 (SGATTYKLTPAQ). The helical transmembrane segment at 117–138 (WFLREGSMFVALSASVFSLLAI) threads the bilayer. 120–121 (RE) contacts sphing-4-enine 1-phosphate. The Cytoplasmic portion of the chain corresponds to 139 to 160 (AIERYITMLKMKLHNGSNRFRS). A helical transmembrane segment spans residues 161–182 (FLLISACWVISLILGGLPIMGW). At 183 to 196 (NCISTLPSCSTVLP) the chain is on the extracellular side. Cysteine 184 and cysteine 191 are joined by a disulfide. Residues 197 to 224 (LYHKHYILFCTTVFTLLLLSIVILYCRI) form a helical membrane-spanning segment. The Cytoplasmic portion of the chain corresponds to 225-257 (YSLVRTRSRRLTFRKNISKASRSSEKSLALLKT). Threonine 236 is subject to Phosphothreonine; by PKB/AKT1. Residues 258–278 (VIIVLGVFIACWAPLFILLLL) form a helical membrane-spanning segment. 265-269 (FIACW) is a binding site for sphing-4-enine 1-phosphate. The Extracellular portion of the chain corresponds to 279–289 (DVGCKVKTCDI). Cysteine 282 and cysteine 287 are oxidised to a cystine. The chain crosses the membrane as a helical span at residues 290–310 (LFRTEYFLVLAVLNSGTNPII). Residues 311-382 (YTLSNKEMRR…MSSGNVNSSS (72 aa)) lie on the Cytoplasmic side of the membrane. Cysteine 328 carries S-palmitoyl cysteine lipidation. Residues 349 to 382 (EFSRSKSDNSSHPQKDDGDNPETIMSSGNVNSSS) form a disordered region. 2 positions are modified to phosphoserine: serine 351 and serine 353. Residues 351–366 (SRSKSDNSSHPQKDDG) are compositionally biased toward basic and acidic residues. Over residues 371-382 (TIMSSGNVNSSS) the composition is skewed to polar residues.

This sequence belongs to the G-protein coupled receptor 1 family. In terms of assembly, interacts with GNAI1 and GNAI3. Interacts with CD69; this interaction promotes S1PR1 degradation. Post-translationally, S1P-induced endothelial cell migration requires the PKB/AKT1-mediated phosphorylation of the third intracellular loop at the Thr-236 residue. In terms of processing, palmitoylated by ZDHHC5. Palmitoylation is required for targeting to plasma membrane, enabling G(i) coupling.

The protein localises to the cell membrane. The protein resides in the endosome. It localises to the membrane raft. Functionally, G-protein coupled receptor for the bioactive lysosphingolipid sphingosine 1-phosphate (S1P) that seems to be coupled to the G(i) subclass of heteromeric G proteins. Signaling leads to the activation of RAC1, SRC, PTK2/FAK1 and MAP kinases. Plays an important role in cell migration, probably via its role in the reorganization of the actin cytoskeleton and the formation of lamellipodia in response to stimuli that increase the activity of the sphingosine kinase SPHK1. Required for normal chemotaxis toward sphingosine 1-phosphate. Required for normal embryonic heart development and normal cardiac morphogenesis. Plays an important role in the regulation of sprouting angiogenesis and vascular maturation. Inhibits sprouting angiogenesis to prevent excessive sprouting during blood vessel development. Required for normal egress of mature T-cells from the thymus into the blood stream and into peripheral lymphoid organs. Plays a role in the migration of osteoclast precursor cells, the regulation of bone mineralization and bone homeostasis. Plays a role in responses to oxidized 1-palmitoyl-2-arachidonoyl-sn-glycero-3-phosphocholine by pulmonary endothelial cells and in the protection against ventilator-induced lung injury. The protein is Sphingosine 1-phosphate receptor 1 (S1PR1) of Bos taurus (Bovine).